Reading from the N-terminus, the 617-residue chain is Mitochondrial Rho GTPase 2 (617 aa).

Over 1–590 (MKRDVRILLL…LNGSDMSSTS (590 aa)) the chain is Cytoplasmic. The 167-residue stretch at 2–168 (KRDVRILLLG…FYYAQKAVLH (167 aa)) folds into the Miro 1 domain. Residues Gly-16, Lys-17, Thr-18, and Ser-19 each coordinate GTP. Thr-18 serves as a coordination point for Mg(2+). Position 57 (Asp-57) interacts with Mg(2+). Ser-59, Asn-118, Lys-119, Asp-121, Ala-149, and Lys-150 together coordinate GTP. 2 consecutive EF-hand domains span residues 184 to 219 (QCVR…CFGN) and 304 to 339 (LGHQ…LPYM). Ca(2+) is bound by residues Asp-197, Asp-199, Asp-201, Glu-208, Asp-317, Asp-319, Asp-321, and Glu-328. In terms of domain architecture, Miro 2 spans 416-578 (RTVFLCKVIG…YSKLTWAAMY (163 aa)). GTP-binding residues include Gly-428, Gly-430, Lys-431, and Thr-432. Mg(2+)-binding residues include Thr-432 and Glu-474. Residues Lys-528 and Asp-530 each coordinate GTP. Residues 591-613 (FWLRVTLGATIAAMLGFALYRAF) traverse the membrane as a helical; Anchor for type IV membrane protein segment. Residues 614 to 617 (SRHK) lie on the Mitochondrial intermembrane side of the membrane.

The protein belongs to the mitochondrial Rho GTPase family. Homodimer.

It localises to the mitochondrion outer membrane. The catalysed reaction is GTP + H2O = GDP + phosphate + H(+). The enzyme catalyses ATP + H2O = ADP + phosphate + H(+). It catalyses the reaction UTP + H2O = UDP + phosphate + H(+). In terms of biological role, atypical mitochondrial nucleoside-triphosphatase (NTPase) involved in mitochondrial trafficking. Probably involved in control of anterograde transport of mitochondria and their subcellular distribution. Can hydrolyze GTP, ATP and UTP. The chain is Mitochondrial Rho GTPase 2 (rhot2) from Danio rerio (Zebrafish).